The primary structure comprises 109 residues: Nucleoid-associated protein A1S_1684 (109 aa).

This sequence belongs to the YbaB/EbfC family. In terms of assembly, homodimer.

Its subcellular location is the cytoplasm. It is found in the nucleoid. Functionally, binds to DNA and alters its conformation. May be involved in regulation of gene expression, nucleoid organization and DNA protection. The chain is Nucleoid-associated protein A1S_1684 from Acinetobacter baumannii (strain ATCC 17978 / DSM 105126 / CIP 53.77 / LMG 1025 / NCDC KC755 / 5377).